Reading from the N-terminus, the 383-residue chain is Methenyltetrahydrofolate synthase domain-containing protein (383 aa).

The disordered stretch occupies residues 249-301; that stretch reads AGKDVTLQGEHQHLPEPGCQQTVPLSVGRRPPDTPGPETNSMEAAPGSPPGEG. One can recognise an RRM domain in the interval 306-379; that stretch reads ADVYVGNLPG…DTLRVALARQ (74 aa).

The sequence is that of Methenyltetrahydrofolate synthase domain-containing protein (MTHFSD) from Homo sapiens (Human).